The primary structure comprises 474 residues: tRNA-2-methylthio-N(6)-dimethylallyladenosine synthase (474 aa).

Positions Lys3–Arg120 constitute an MTTase N-terminal domain. Residues Cys12, Cys49, Cys83, Cys157, Cys161, and Cys164 each contribute to the [4Fe-4S] cluster site. In terms of domain architecture, Radical SAM core spans Arg143–Arg375. One can recognise a TRAM domain in the interval Arg378–Arg441.

This sequence belongs to the methylthiotransferase family. MiaB subfamily. Monomer. Requires [4Fe-4S] cluster as cofactor.

The protein localises to the cytoplasm. The enzyme catalyses N(6)-dimethylallyladenosine(37) in tRNA + (sulfur carrier)-SH + AH2 + 2 S-adenosyl-L-methionine = 2-methylsulfanyl-N(6)-dimethylallyladenosine(37) in tRNA + (sulfur carrier)-H + 5'-deoxyadenosine + L-methionine + A + S-adenosyl-L-homocysteine + 2 H(+). Its function is as follows. Catalyzes the methylthiolation of N6-(dimethylallyl)adenosine (i(6)A), leading to the formation of 2-methylthio-N6-(dimethylallyl)adenosine (ms(2)i(6)A) at position 37 in tRNAs that read codons beginning with uridine. In Shewanella sp. (strain ANA-3), this protein is tRNA-2-methylthio-N(6)-dimethylallyladenosine synthase.